A 103-amino-acid chain; its full sequence is N(4)-acetylcytidine amidohydrolase (103 aa).

Residues 6 to 94 (ITFFQRFQND…IAEIYPNQTQ (89 aa)) enclose the ASCH domain. Lys-21 (proton acceptor) is an active-site residue. The Nucleophile role is filled by Thr-24. The active-site Proton donor is the Glu-74.

Belongs to the N(4)-acetylcytidine amidohydrolase family.

It carries out the reaction N(4)-acetylcytidine + H2O = cytidine + acetate + H(+). The enzyme catalyses N(4)-acetyl-2'-deoxycytidine + H2O = 2'-deoxycytidine + acetate + H(+). It catalyses the reaction N(4)-acetylcytosine + H2O = cytosine + acetate + H(+). Functionally, catalyzes the hydrolysis of N(4)-acetylcytidine (ac4C). This is N(4)-acetylcytidine amidohydrolase (yqfB) from Salmonella typhi.